Consider the following 168-residue polypeptide: Phosphopantetheine adenylyltransferase (168 aa).

S9 lines the substrate pocket. Residues 9–10 and H17 contribute to the ATP site; that span reads SF. Substrate contacts are provided by K41, L73, and R87. Residues 88–90, E98, and 123–129 contribute to the ATP site; these read GLR and YAFLSSS.

Belongs to the bacterial CoaD family. Homohexamer. Mg(2+) serves as cofactor.

The protein resides in the cytoplasm. It catalyses the reaction (R)-4'-phosphopantetheine + ATP + H(+) = 3'-dephospho-CoA + diphosphate. The protein operates within cofactor biosynthesis; coenzyme A biosynthesis; CoA from (R)-pantothenate: step 4/5. Functionally, reversibly transfers an adenylyl group from ATP to 4'-phosphopantetheine, yielding dephospho-CoA (dPCoA) and pyrophosphate. This is Phosphopantetheine adenylyltransferase from Heliobacterium modesticaldum (strain ATCC 51547 / Ice1).